Reading from the N-terminus, the 45-residue chain is Large ribosomal subunit protein bL34 (45 aa).

The protein belongs to the bacterial ribosomal protein bL34 family.

In Paenarthrobacter aurescens (strain TC1), this protein is Large ribosomal subunit protein bL34.